The following is a 1091-amino-acid chain: Exonuclease/helicase subunit RexB (1091 aa).

This sequence belongs to the helicase family. AddB/RexB type 2 subfamily. As to quaternary structure, heterodimer of RexA (AddA) and RexB. Mg(2+) serves as cofactor.

Functionally, involved in DNA double-strand break repair. Is not involved in recombination during natural competence or in plasmid establishment. Its function is as follows. The heterodimer acts as both an ATP-dependent DNA helicase and an ATP-dependent, dual-direction single-stranded exonuclease. Recognizes the chi site generating a DNA molecule suitable for the initiation of homologous recombination. This subunit has 5' -&gt; 3' nuclease activity but not helicase activity. This is Exonuclease/helicase subunit RexB from Streptococcus pneumoniae serotype 4 (strain ATCC BAA-334 / TIGR4).